A 184-amino-acid polypeptide reads, in one-letter code: GTP-binding protein Rheb (184 aa).

K8 is covalently cross-linked (Glycyl lysine isopeptide (Lys-Gly) (interchain with G-Cter in ubiquitin)). GDP is bound by residues S16, V17, G18, K19, S20, S21, V32, and D33. S16 is a binding site for GTP. 5 residues coordinate GTP: G18, K19, S20, S21, and V32. S20 is a Mg(2+) binding site. Residues Y35, T38, N119, and D122 each contribute to the GTP site. An Effector region motif is present at residues 35–43 (YDPTIENTF). T38 serves as a coordination point for Mg(2+). The GDP site is built by N119 and D122. S130 is subject to Phosphoserine; by MAPKAPK5. Residue A150 coordinates GDP. A150 contacts GTP. C181 carries the cysteine methyl ester modification. Residue C181 is the site of S-farnesyl cysteine attachment. Residues 182–184 (SVM) constitute a propeptide, removed in mature form.

This sequence belongs to the small GTPase superfamily. Rheb family. As to quaternary structure, associates with the mTORC1 complex (MTOR, MLST8 and RPTOR) in a guanyl nucleotide-independent manner. Interacts with TSC2. Interacts with MCRS1; the interaction maintains RHEB at the lysosome in its active GTP-bound form and prevents its interaction with the mTORC1 complex inhibitor TSC2, ensuring activation of the mTORC1 complex by RHEB. Interacts (when prenylated) with PDE6D; this promotes release from membranes. Post-translationally, farnesylation is important for efficiently activating mTORC1-mediated signaling. In terms of processing, polyubiquitinated in response to amino acid, promoting its interaction with MTOR and mTORC1 activation. Deubiquitination by ATXN3 promotes recruitment of the TSC-TBC complex and RHEB inactivation by TSC2. Monoubiquitinated at Lys-8 by RNF152, promoting its association with the TSC-TBC complex. Deubiquitinated at Lys-8 by USP4, promoting mTORC1 activation. Phosphorylation by MAPKAPK5 impairs GTP-binding and inactivation. In terms of tissue distribution, ubiquitous. Highest levels observed in skeletal and cardiac muscle.

Its subcellular location is the endomembrane system. It is found in the lysosome membrane. The protein localises to the golgi apparatus membrane. It localises to the endoplasmic reticulum membrane. The protein resides in the cytoplasm. Its subcellular location is the cytosol. The enzyme catalyses GTP + H2O = GDP + phosphate + H(+). Its activity is regulated as follows. Alternates between an inactive form bound to GDP and an active form bound to GTP. Inactivated by the TSC-TBC complex via the GTPase activating protein (GAP) domain of TSC2. Autoinhibited by Tyr-35, which constrains the active site conformation, restricting the access of the catalytic Asp-65 to the nucleotide-binding pocket. Specifically inhibited by NR1 (4-bromo-6-(3,4-dichlorophenylthio)-1-(4-(dimethylcarbamoyl)benzyl)-1H-indole-2-carboxylic acid). Its function is as follows. Small GTPase that acts as an allosteric activator of the canonical mTORC1 complex, an evolutionarily conserved central nutrient sensor that stimulates anabolic reactions and macromolecule biosynthesis to promote cellular biomass generation and growth. In response to nutrients, growth factors or amino acids, specifically activates the protein kinase activity of MTOR, the catalytic component of the mTORC1 complex: acts by causing a conformational change that allows the alignment of residues in the active site of MTOR, thereby enhancing the phosphorylation of ribosomal protein S6 kinase (RPS6KB1 and RPS6KB2) and EIF4EBP1 (4E-BP1). RHEB is also required for localization of the TSC-TBC complex to lysosomal membranes. In response to starvation, RHEB is inactivated by the TSC-TBC complex, preventing activation of mTORC1. Has low intrinsic GTPase activity. This chain is GTP-binding protein Rheb, found in Homo sapiens (Human).